The following is a 575-amino-acid chain: Cyclic nucleotide-gated channel alpha-4 (575 aa).

At methionine 1 to leucine 38 the chain is on the cytoplasmic side. The chain crosses the membrane as a helical span at residues asparagine 39–aspartate 60. The Extracellular segment spans residues leucine 61 to phenylalanine 70. Residues valine 71–glycine 91 form a helical membrane-spanning segment. The Cytoplasmic segment spans residues phenylalanine 92–leucine 116. A helical membrane pass occupies residues leucine 117–histidine 135. The Extracellular portion of the chain corresponds to isoleucine 136–arginine 140. A helical membrane pass occupies residues leucine 141–threonine 159. Residues arginine 160–alanine 166 are Cytoplasmic-facing. An ion conduction pathway region spans residues proline 164–methionine 272. The helical transmembrane segment at phenylalanine 167 to leucine 190 threads the bilayer. Residues serine 191–arginine 213 lie on the Extracellular side of the membrane. Transmembrane regions (helical) follow at residues leucine 214 to valine 248 and glycine 249 to asparagine 273. The selectivity filter stretch occupies residues threonine 231–aspartate 234. The tract at residues threonine 274–glutamine 350 is C-linker. At threonine 274–glutamate 575 the chain is on the cytoplasmic side. An IQ-type motif is present at residues leucine 292–arginine 302. Isoleucine 348–isoleucine 471 serves as a coordination point for a nucleoside 3',5'-cyclic phosphate. The tract at residues alanine 354–lysine 474 is cyclic nucleotide-binding domain. 3',5'-cyclic GMP-binding residues include glycine 414, serine 417, arginine 430, and threonine 431. Residues arginine 430 and threonine 431 each coordinate 3',5'-cyclic AMP. The stretch at threonine 493–glutamate 547 forms a coiled coil. A disordered region spans residues threonine 536–glutamate 575. Positions aspartate 544–proline 554 are enriched in acidic residues. The span at threonine 558–glycine 567 shows a compositional bias: basic and acidic residues.

Belongs to the cyclic nucleotide-gated cation channel (TC 1.A.1.5) family. CNGA4 subfamily. In terms of assembly, the olfactory cyclic nucleotide-gated channel is an heterotetramer composed of CNGA2, CNGA4 and CNGB1b subunits with 2:1:1 stoichiometry. Expressed in the olfactory epithelium.

The protein localises to the cell projection. It is found in the cilium membrane. The catalysed reaction is Ca(2+)(in) = Ca(2+)(out). It catalyses the reaction Na(+)(in) = Na(+)(out). The enzyme catalyses K(+)(in) = K(+)(out). It carries out the reaction NH4(+)(in) = NH4(+)(out). The catalysed reaction is Rb(+)(in) = Rb(+)(out). It catalyses the reaction Li(+)(in) = Li(+)(out). The enzyme catalyses Cs(+)(in) = Cs(+)(out). Ca(2+)-calmodulin exerts its inhibitory effect in cAMP sensitivity by binding to IQ-like motif of CNGA4 and preferably binds to the channel in the closed state. Inhibition by PIP3 of the CNG channel probably occurs via CGNA2 binding. Functionally, pore-forming subunit of the olfactory cyclic nucleotide-gated channel. Operates in the cilia of olfactory sensory neurons where chemical stimulation of the odorant is converted to an electrical signal. Mediates odorant-induced cAMP-dependent Ca(2+) influx triggering neuron depolarization. The rise of intracellular Ca(2+) levels potentiates the olfactory response by activating Ca(2+)-dependent Cl(-) channels, but it also serves as a negative feedback signal to desensitize the channel for rapid adaptation to odorants. Conducts cGMP- and cAMP-gated ion currents, with permeability for monovalent and divalent cations. Conducts cAMP- and cGMP-gated ion currents, with permeability for monovalent and divalent cations. May conduct nitric oxide-gated Ca(2+) currents relevant to neurons of vomeronasal organ, a system involved in the perception of pheromones. The protein is Cyclic nucleotide-gated channel alpha-4 of Mus musculus (Mouse).